The following is a 65-amino-acid chain: Small ribosomal subunit protein eS17 (65 aa).

This sequence belongs to the eukaryotic ribosomal protein eS17 family.

This is Small ribosomal subunit protein eS17 from Methanobrevibacter smithii (strain ATCC 35061 / DSM 861 / OCM 144 / PS).